Reading from the N-terminus, the 335-residue chain is Holliday junction branch migration complex subunit RuvB (335 aa).

A large ATPase domain (RuvB-L) region spans residues methionine 1–tyrosine 181. Leucine 20 contacts ATP. The ADP site is built by arginine 21, tyrosine 28, isoleucine 29, glycine 62, leucine 63, glycine 64, lysine 65, threonine 66, and threonine 67. Residues glutamate 128–tyrosine 130 and arginine 171 contribute to the ATP site. Residues tyrosine 181 and arginine 218 each contribute to the ADP site. Residues lysine 182–glycine 252 form a small ATPAse domain (RuvB-S) region. Residues glutamate 255–glutamate 335 form a head domain (RuvB-H) region. DNA-binding residues include arginine 309 and arginine 314.

The protein belongs to the RuvB family. In terms of assembly, homohexamer. Forms an RuvA(8)-RuvB(12)-Holliday junction (HJ) complex. HJ DNA is sandwiched between 2 RuvA tetramers; dsDNA enters through RuvA and exits via RuvB. An RuvB hexamer assembles on each DNA strand where it exits the tetramer. Each RuvB hexamer is contacted by two RuvA subunits (via domain III) on 2 adjacent RuvB subunits; this complex drives branch migration. In the full resolvosome a probable DNA-RuvA(4)-RuvB(12)-RuvC(2) complex forms which resolves the HJ.

It localises to the cytoplasm. The catalysed reaction is ATP + H2O = ADP + phosphate + H(+). Functionally, the RuvA-RuvB-RuvC complex processes Holliday junction (HJ) DNA during genetic recombination and DNA repair, while the RuvA-RuvB complex plays an important role in the rescue of blocked DNA replication forks via replication fork reversal (RFR). RuvA specifically binds to HJ cruciform DNA, conferring on it an open structure. The RuvB hexamer acts as an ATP-dependent pump, pulling dsDNA into and through the RuvAB complex. RuvB forms 2 homohexamers on either side of HJ DNA bound by 1 or 2 RuvA tetramers; 4 subunits per hexamer contact DNA at a time. Coordinated motions by a converter formed by DNA-disengaged RuvB subunits stimulates ATP hydrolysis and nucleotide exchange. Immobilization of the converter enables RuvB to convert the ATP-contained energy into a lever motion, pulling 2 nucleotides of DNA out of the RuvA tetramer per ATP hydrolyzed, thus driving DNA branch migration. The RuvB motors rotate together with the DNA substrate, which together with the progressing nucleotide cycle form the mechanistic basis for DNA recombination by continuous HJ branch migration. Branch migration allows RuvC to scan DNA until it finds its consensus sequence, where it cleaves and resolves cruciform DNA. The polypeptide is Holliday junction branch migration complex subunit RuvB (Campylobacter jejuni subsp. jejuni serotype O:2 (strain ATCC 700819 / NCTC 11168)).